The chain runs to 315 residues: Lipase 3 (315 aa).

An N-terminal signal peptide occupies residues 1–18 (MLLKRLGLAALFSLSMVG). The N-palmitoyl cysteine moiety is linked to residue Cys-19. Residue Cys-19 is the site of S-diacylglycerol cysteine attachment. The AB hydrolase-1 domain occupies 69–296 (PLLLIHGFGG…MNDVGHVPMV (228 aa)). His-74 is an active-site residue. Residue Ser-142 is the Charge relay system of the active site.

The protein belongs to the lipase/esterase LIP3/BchO family.

The protein localises to the cell membrane. It catalyses the reaction a triacylglycerol + H2O = a diacylglycerol + a fatty acid + H(+). This is Lipase 3 (lip3) from Moraxella sp. (strain TA144).